We begin with the raw amino-acid sequence, 474 residues long: Aspartyl/glutamyl-tRNA(Asn/Gln) amidotransferase subunit B (474 aa).

This sequence belongs to the GatB/GatE family. GatB subfamily. Heterotrimer of A, B and C subunits.

It catalyses the reaction L-glutamyl-tRNA(Gln) + L-glutamine + ATP + H2O = L-glutaminyl-tRNA(Gln) + L-glutamate + ADP + phosphate + H(+). The enzyme catalyses L-aspartyl-tRNA(Asn) + L-glutamine + ATP + H2O = L-asparaginyl-tRNA(Asn) + L-glutamate + ADP + phosphate + 2 H(+). Functionally, allows the formation of correctly charged Asn-tRNA(Asn) or Gln-tRNA(Gln) through the transamidation of misacylated Asp-tRNA(Asn) or Glu-tRNA(Gln) in organisms which lack either or both of asparaginyl-tRNA or glutaminyl-tRNA synthetases. The reaction takes place in the presence of glutamine and ATP through an activated phospho-Asp-tRNA(Asn) or phospho-Glu-tRNA(Gln). In Methanospirillum hungatei JF-1 (strain ATCC 27890 / DSM 864 / NBRC 100397 / JF-1), this protein is Aspartyl/glutamyl-tRNA(Asn/Gln) amidotransferase subunit B.